The following is a 162-amino-acid chain: Disulfide bond formation protein B (162 aa).

The Cytoplasmic portion of the chain corresponds to Met-1–Ala-8. A helical transmembrane segment spans residues Val-9 to Ala-25. Topologically, residues Ala-26–Leu-43 are periplasmic. Cys-35 and Cys-38 are oxidised to a cystine. Residues Cys-44–Pro-60 form a helical membrane-spanning segment. Over Lys-61 to Leu-67 the chain is Cytoplasmic. The helical transmembrane segment at Ser-68 to Ala-85 threads the bilayer. Over Tyr-86–Val-141 the chain is Periplasmic. Cys-101 and Cys-128 are oxidised to a cystine. A helical transmembrane segment spans residues Trp-142–Arg-160. The Cytoplasmic portion of the chain corresponds to Ala-161–Lys-162.

Belongs to the DsbB family.

It is found in the cell inner membrane. Its function is as follows. Required for disulfide bond formation in some periplasmic proteins. Acts by oxidizing the DsbA protein. This chain is Disulfide bond formation protein B, found in Neisseria gonorrhoeae (strain ATCC 700825 / FA 1090).